A 165-amino-acid polypeptide reads, in one-letter code: Transcription antitermination protein NusB (165 aa).

Belongs to the NusB family.

Its function is as follows. Involved in transcription antitermination. Required for transcription of ribosomal RNA (rRNA) genes. Binds specifically to the boxA antiterminator sequence of the ribosomal RNA (rrn) operons. This Chlorobium phaeobacteroides (strain DSM 266 / SMG 266 / 2430) protein is Transcription antitermination protein NusB.